The sequence spans 375 residues: Trichodiene synthase (375 aa).

This sequence belongs to the trichodiene synthase family.

It carries out the reaction (2E,6E)-farnesyl diphosphate = trichodiene + diphosphate. It participates in sesquiterpene biosynthesis; trichothecene biosynthesis. In terms of biological role, TS is a member of the terpene cyclase group of enzymes. It catalyzes the isomerization and cyclization of farnesyl pyro-phosphate to form trichodiene, the first cyclic intermediate in the biosynthetic pathway for trichothecenes. It serves to branch trichothecene biosynthesis from the isoprenoid pathway. The polypeptide is Trichodiene synthase (TRI5) (Fusarium cortaderiae).